Consider the following 692-residue polypeptide: Elongation factor G (692 aa).

The tr-type G domain occupies 8–282; it reads ERTRNIGIMA…AIVDYLPAPT (275 aa). GTP-binding positions include 17 to 24, 81 to 85, and 135 to 138; these read AHIDAGKT, DTPGH, and NKMD.

The protein belongs to the TRAFAC class translation factor GTPase superfamily. Classic translation factor GTPase family. EF-G/EF-2 subfamily.

Its subcellular location is the cytoplasm. In terms of biological role, catalyzes the GTP-dependent ribosomal translocation step during translation elongation. During this step, the ribosome changes from the pre-translocational (PRE) to the post-translocational (POST) state as the newly formed A-site-bound peptidyl-tRNA and P-site-bound deacylated tRNA move to the P and E sites, respectively. Catalyzes the coordinated movement of the two tRNA molecules, the mRNA and conformational changes in the ribosome. This chain is Elongation factor G, found in Desulforamulus reducens (strain ATCC BAA-1160 / DSM 100696 / MI-1) (Desulfotomaculum reducens).